A 365-amino-acid polypeptide reads, in one-letter code: Cytochrome P450 71A3 (365 aa).

It belongs to the cytochrome P450 family. Heme serves as cofactor.

Functionally, may have a role in maturation, such as during flavor formation or other metabolite production specific to aging tissues. The protein is Cytochrome P450 71A3 (CYP71A3) of Solanum melongena (Eggplant).